Reading from the N-terminus, the 133-residue chain is Nickel-responsive regulator (133 aa).

Ni(2+) is bound by residues His76, His87, His89, and Cys95.

It belongs to the transcriptional regulatory CopG/NikR family. As to quaternary structure, homotetramer. Ni(2+) is required as a cofactor.

Transcriptional repressor of the nikABCDE operon. Is active in the presence of excessive concentrations of intracellular nickel. In Salmonella paratyphi A (strain ATCC 9150 / SARB42), this protein is Nickel-responsive regulator.